The chain runs to 757 residues: Vitamin K-dependent gamma-carboxylase (757 aa).

N-acetylalanine is present on A2. The Cytoplasmic segment spans residues 2–60; the sequence is AVHRGSALVAPASDKVQKNKSAQTSGLKQGSRMEKILGFEWTDLSSWQSVVTLLNKPTD. Residues 61 to 81 form a helical membrane-spanning segment; the sequence is PANLAVFRFLFAFLMLLDIPQ. The Lumenal segment spans residues 82–113; the sequence is ERGLSSLDRKYLDGLDVCRFPLLDALRPLPLD. A disulfide bond links C99 and C450. The helical transmembrane segment at 114–134 threads the bilayer; the sequence is WMYLVYTIMFLGALGMMLGLC. Over 135–136 the chain is Cytoplasmic; sequence YR. The helical transmembrane segment at 137–157 threads the bilayer; it reads LSCVLFLLPYWYVFLLDKTSW. The Lumenal segment spans residues 158-292; the sequence is NNHSYLYGLL…VSYFHCMNSQ (135 aa). A helical transmembrane segment spans residues 293 to 313; it reads LFSIGMFPYVMLASSPLFCSA. Residues 314–361 lie on the Cytoplasmic side of the membrane; the sequence is EWPRKLVARCPKRLQELLPTKAAPRPSASCVYKRSRGKAGPKPGLRHQ. The chain crosses the membrane as a helical span at residues 362-382; sequence LGAIFTLLYLLEQLFLPYSHF. Residues 383-757 lie on the Lumenal side of the membrane; the sequence is LTQGYNNWTN…PDSEHVHSEF (375 aa). The tract at residues 729–757 is disordered; that stretch reads EPVDESSASNTDSSNHPSEPDSEHVHSEF. Residues 734 to 745 show a composition bias toward polar residues; sequence SSASNTDSSNHP. The segment covering 746 to 757 has biased composition (basic and acidic residues); sequence SEPDSEHVHSEF.

Belongs to the vitamin K-dependent gamma-carboxylase family. Monomer. May interact with CALU.

It is found in the endoplasmic reticulum membrane. The catalysed reaction is 4-carboxy-L-glutamyl-[protein] + 2,3-epoxyphylloquinone + H2O + H(+) = phylloquinol + L-glutamyl-[protein] + CO2 + O2. Its function is as follows. Mediates the vitamin K-dependent carboxylation of glutamate residues to calcium-binding gamma-carboxyglutamate (Gla) residues with the concomitant conversion of the reduced hydroquinone form of vitamin K to vitamin K epoxide. Catalyzes gamma-carboxylation of various proteins, such as blood coagulation factors (F2, F7, F9 and F10), osteocalcin (bglap and bglap2) or matrix Gla protein (MGP). This Mus musculus (Mouse) protein is Vitamin K-dependent gamma-carboxylase (Ggcx).